A 156-amino-acid polypeptide reads, in one-letter code: Ribosomal RNA large subunit methyltransferase H (156 aa).

Residues Leu-73, Gly-104, and 123–128 (LSSLTL) each bind S-adenosyl-L-methionine.

The protein belongs to the RNA methyltransferase RlmH family. In terms of assembly, homodimer.

It is found in the cytoplasm. It carries out the reaction pseudouridine(1915) in 23S rRNA + S-adenosyl-L-methionine = N(3)-methylpseudouridine(1915) in 23S rRNA + S-adenosyl-L-homocysteine + H(+). Functionally, specifically methylates the pseudouridine at position 1915 (m3Psi1915) in 23S rRNA. This Ralstonia nicotianae (strain ATCC BAA-1114 / GMI1000) (Ralstonia solanacearum) protein is Ribosomal RNA large subunit methyltransferase H.